We begin with the raw amino-acid sequence, 748 residues long: Probable transcriptional regulator SLK1 (748 aa).

2 disordered regions span residues 67–93 (QHLPQQQQQQLLQQQTGQGSVPMRENN) and 138–163 (QQRLRQHQQMLQSMSPSQRLQLQQQQ). A compositionally biased stretch (low complexity) spans 71 to 81 (QQQQQQLLQQQ). Positions 204-451 (PAENCITYWR…EQKIGPIEGL (248 aa)) are dimerization. The short motif at 213–227 (RKFVAEYFSPRAKQR) is the Nuclear localization signal element. Polar residues predominate over residues 572–587 (NAMNNPNSNTGKQEGF). Disordered stretches follow at residues 572 to 653 (NAMN…GNTP) and 667 to 712 (ENGG…NNSF). Residues 588–606 (SSQNPTPNSNQSPSSSSQQ) are compositionally biased toward low complexity. Polar residues predominate over residues 615-653 (FPNSPQMQQQQRTMNGPTNILPQNHPHQLQSPHSHGNTP). Low complexity predominate over residues 667–686 (ENGGSVQQQQAFSGQSGSNS). The segment covering 687-699 (NAERNTTASTSNI) has biased composition (polar residues).

This sequence belongs to the adn1/SEU family. Forms corepressor complexes with LUH; LUH is the transcription repressor subunit and SLK1 the specific DNA-binding adapters. As to expression, expressed in young flower meristems, ovules and the carpel margin meristem.

It is found in the nucleus. Functionally, probable transcription regulator that functions in the development of the carpel margin meristem similarly to SEUSS (SEU). In association with SEU, supports organ development from meristematic regions by facilitating auxin response and thus organ initiation, and by sustaining meristematic potential through the maintenance of PHABULOSA expression. DNA-binding adapter subunit of the SEU-SLK1 transcriptional corepressor of abiotic stress (e.g. salt and osmotic stress) response genes. The chain is Probable transcriptional regulator SLK1 (SLK1) from Arabidopsis thaliana (Mouse-ear cress).